Reading from the N-terminus, the 177-residue chain is Large ribosomal subunit protein uL6 (177 aa).

This sequence belongs to the universal ribosomal protein uL6 family. In terms of assembly, part of the 50S ribosomal subunit.

Its function is as follows. This protein binds to the 23S rRNA, and is important in its secondary structure. It is located near the subunit interface in the base of the L7/L12 stalk, and near the tRNA binding site of the peptidyltransferase center. In Cupriavidus taiwanensis (strain DSM 17343 / BCRC 17206 / CCUG 44338 / CIP 107171 / LMG 19424 / R1) (Ralstonia taiwanensis (strain LMG 19424)), this protein is Large ribosomal subunit protein uL6.